Consider the following 933-residue polypeptide: Dual 3',5'-cyclic-AMP and -GMP phosphodiesterase 11A (933 aa).

Residues 42–121 are disordered; that stretch reads HTSGQGASSL…LQRRASQKEL (80 aa). Phosphoserine is present on residues Ser-162, Ser-163, and Ser-239. GAF domains are found at residues 217–370 and 402–558; these read DLTS…GIAI and DLEK…GLGI. 3',5'-cyclic GMP is bound at residue Ser-424. The 325-residue stretch at 588 to 912 folds into the PDEase domain; the sequence is SKAEVDKFKA…RKWEELHQKR (325 aa). Catalysis depends on His-664, which acts as the Proton donor. A divalent metal cation contacts are provided by His-668, His-704, Asp-705, and Asp-816. Positions 913-933 are disordered; it reads LQVSAASPDPASPMVAGEDRL.

The protein belongs to the cyclic nucleotide phosphodiesterase family. A divalent metal cation is required as a cofactor. As to expression, expressed in testis and developing spermatoza.

Its subcellular location is the cytoplasm. It localises to the cytosol. It catalyses the reaction 3',5'-cyclic GMP + H2O = GMP + H(+). It carries out the reaction 3',5'-cyclic AMP + H2O = AMP + H(+). Inhibited by 3-isobutyl-1-methylxanthine (IBMX), zaprinast and dipyridamole. cGMP acts as an allosteric activator. In terms of biological role, plays a role in signal transduction by regulating the intracellular concentration of cyclic nucleotides cAMP and cGMP. Catalyzes the hydrolysis of both cAMP and cGMP to 5'-AMP and 5'-GMP, respectively. The chain is Dual 3',5'-cyclic-AMP and -GMP phosphodiesterase 11A (Pde11a) from Mus musculus (Mouse).